We begin with the raw amino-acid sequence, 482 residues long: Alanine aminotransferase 2 (482 aa).

The residue at position 299 (lysine 299) is an N6-(pyridoxal phosphate)lysine.

This sequence belongs to the class-I pyridoxal-phosphate-dependent aminotransferase family. Alanine aminotransferase subfamily. In terms of assembly, homodimer. Pyridoxal 5'-phosphate is required as a cofactor. Post-translationally, the N-terminus is blocked. As to expression, mesophyll and bundle sheath cells.

It catalyses the reaction L-alanine + 2-oxoglutarate = pyruvate + L-glutamate. Its pathway is photosynthesis; C4 acid pathway. The protein operates within amino-acid degradation; L-alanine degradation via transaminase pathway; pyruvate from L-alanine: step 1/1. Functionally, transfer of C3 units between the cytosol of mesophyll and bundle sheath cells to maintain a nitrogen-carbon balance in the C4-dicarboxylic pathway. The chain is Alanine aminotransferase 2 from Panicum miliaceum (Proso millet).